The primary structure comprises 751 residues: WD repeat-containing protein 91 (751 aa).

The stretch at 188-212 (IQEENESLRHKLFALQAESSRMKKE) forms a coiled coil. The interval 264–395 (LSQSKKGPAR…ASSTESVGVR (132 aa)) is disordered. The segment covering 278–287 (SGASPTQTGS) has biased composition (polar residues). Residues 334 to 346 (RLQEHGKERRELL) show a composition bias toward basic and acidic residues. Over residues 377–391 (QAETSTKMPASSTES) the composition is skewed to polar residues. WD repeat units lie at residues 410–449 (EHHS…QTKA), 452–492 (ISKS…NLCE), 497–559 (EDMP…QQLQ), 564–603 (PEPI…CAMS), 606–645 (AHDG…LKIS), 668–706 (VQFP…KVLE), and 713–751 (GHRA…AQKS).

The protein belongs to the WD repeat WDR91 family.

It is found in the early endosome membrane. The protein resides in the late endosome membrane. Functions as a negative regulator of the PI3 kinase/PI3K activity associated with endosomal membranes. By modifying the phosphatidylinositol 3-phosphate/PtdInsP3 content of endosomal membranes may regulate endosome fusion, recycling, sorting and early to late endosome transport. The chain is WD repeat-containing protein 91 from Gallus gallus (Chicken).